The sequence spans 313 residues: Pyrimidine-specific ribonucleoside hydrolase RihB (313 aa).

Aspartate 11 (proton acceptor) is an active-site residue. Residues aspartate 11, aspartate 16, and valine 124 each coordinate Ca(2+). Substrate contacts are provided by glutamine 227 and histidine 239. Residue aspartate 240 participates in Ca(2+) binding.

It belongs to the IUNH family. RihB subfamily. As to quaternary structure, homotetramer. The cofactor is Ca(2+).

The catalysed reaction is a pyrimidine ribonucleoside + H2O = a pyrimidine nucleobase + D-ribose. Functionally, hydrolyzes cytidine or uridine to ribose and cytosine or uracil, respectively. Has a clear preference for cytidine over uridine. Strictly specific for ribonucleosides. The chain is Pyrimidine-specific ribonucleoside hydrolase RihB from Escherichia coli (strain K12 / DH10B).